The sequence spans 406 residues: Phosphopentomutase (406 aa).

Residues aspartate 10, aspartate 305, histidine 310, aspartate 346, histidine 347, and histidine 358 each contribute to the Mn(2+) site.

Belongs to the phosphopentomutase family. Mn(2+) is required as a cofactor.

It localises to the cytoplasm. It catalyses the reaction 2-deoxy-alpha-D-ribose 1-phosphate = 2-deoxy-D-ribose 5-phosphate. The enzyme catalyses alpha-D-ribose 1-phosphate = D-ribose 5-phosphate. It functions in the pathway carbohydrate degradation; 2-deoxy-D-ribose 1-phosphate degradation; D-glyceraldehyde 3-phosphate and acetaldehyde from 2-deoxy-alpha-D-ribose 1-phosphate: step 1/2. Functionally, isomerase that catalyzes the conversion of deoxy-ribose 1-phosphate (dRib-1-P) and ribose 1-phosphate (Rib-1-P) to deoxy-ribose 5-phosphate (dRib-5-P) and ribose 5-phosphate (Rib-5-P), respectively. This Allorhizobium ampelinum (strain ATCC BAA-846 / DSM 112012 / S4) (Agrobacterium vitis (strain S4)) protein is Phosphopentomutase.